We begin with the raw amino-acid sequence, 295 residues long: Elongation factor Ts (295 aa).

Positions 79–82 (TDFV) are involved in Mg(2+) ion dislocation from EF-Tu.

This sequence belongs to the EF-Ts family.

Its subcellular location is the cytoplasm. In terms of biological role, associates with the EF-Tu.GDP complex and induces the exchange of GDP to GTP. It remains bound to the aminoacyl-tRNA.EF-Tu.GTP complex up to the GTP hydrolysis stage on the ribosome. The polypeptide is Elongation factor Ts (Bacillus cereus (strain G9842)).